The chain runs to 439 residues: MAPKKKRGPSAGSQPGGAAAAGAEQPLSERAQYLQREHALLSEQLDTCEESVDQVLRENAFLDREALRLREENRLYASYVSARAQRCAKAIVRLDEQNRVDLAQIHWQRAELASLYHGREDGVRAQLLEMEARAAQMAQQVQELQPYKVLQLEQLARIRALERELLHMRVEHTQLLHRVKRRFLEDKAAFEREARQRVQSLARRAEREAVRALVAHTQAIKADNGRLRQELLLLLRRTQLLHHTRRQLLEQREQLHREHEDTRDLARVHGWLRRGPGGPPLWERPAFSQPTSRPGSLAAPISPSRAASQTPSVVPSRAAPRASSVVPSREASRVPSLVLSSMDSRVPSLATSKVGSRMPSLTASRAGSRALSLVQSLEGSGISSGSSPRVSSQDTLRSTKSGPKLLSGLSRDRDPALLPPQSEDSVNAEAAAEASPGRA.

The interval M1–S28 is disordered. Low complexity predominate over residues P9 to A23. 2 coiled-coil regions span residues L27–R74 and D121–L213. Residues P276 to A439 are disordered. A compositionally biased stretch (polar residues) spans V338–R365. Low complexity-rich tracts occupy residues S376–S392 and A428–A439.

The sequence is that of Coiled-coil domain-containing protein 166 (CCDC166) from Homo sapiens (Human).